A 274-amino-acid chain; its full sequence is MPRAEPRATLGEQEKAGLPLGAWRLYLLRHFRKQTELRRSGSRDVTGALLVAAAVASEAVGSLRVAEGGPNTLLLQVLRSWPWCNKELKTMEERKVKRRSPKSFSAHCTQVVNAKKNAIPVSKSTGFSNPASQSTSQRPKLKRVMKEKTKPQGGEGKGAQSTPIQHSFLTDVSDVQEMERGLLSLLNDFHSGKLQAFGNECSIEQMEHVRGMQEKLARLNLELYGELEELPEDKRKTASDSNLDRLLSDLEELNSSIQKLHLADAQDVPNTSAS.

The interval 121–166 (VSKSTGFSNPASQSTSQRPKLKRVMKEKTKPQGGEGKGAQSTPIQH) is disordered. Positions 122–138 (SKSTGFSNPASQSTSQR) are enriched in polar residues. A coiled-coil region spans residues 234-263 (KRKTASDSNLDRLLSDLEELNSSIQKLHLA).

This is Coiled-coil domain-containing protein 28A (CCDC28A) from Homo sapiens (Human).